A 90-amino-acid polypeptide reads, in one-letter code: Small ribosomal subunit protein bS20 (90 aa).

The span at 1 to 10 (MANHKSTQKS) shows a compositional bias: polar residues. Residues 1–25 (MANHKSTQKSIRQDQKRNLINKSRK) form a disordered region.

It belongs to the bacterial ribosomal protein bS20 family.

In terms of biological role, binds directly to 16S ribosomal RNA. In Orientia tsutsugamushi (strain Boryong) (Rickettsia tsutsugamushi), this protein is Small ribosomal subunit protein bS20.